The following is a 309-amino-acid chain: Glutaminase (309 aa).

Positions 64, 114, 160, 167, 191, 243, and 261 each coordinate substrate.

This sequence belongs to the glutaminase family. In terms of assembly, homotetramer.

The catalysed reaction is L-glutamine + H2O = L-glutamate + NH4(+). The protein is Glutaminase of Rhizobium etli (strain CIAT 652).